A 150-amino-acid chain; its full sequence is uncharacterized protein (150 aa).

This is an uncharacterized protein from Azospirillum brasilense.